The primary structure comprises 175 residues: B9 domain-containing protein 2 (175 aa).

Positions 2 to 118 (AEVHVIGQII…DCPTWRPLGS (117 aa)) constitute a C2 B9-type domain.

Belongs to the B9D family. In terms of assembly, part of the tectonic-like complex (also named B9 complex). Interacts with TUBG1. In terms of tissue distribution, highest expression in thymus and skeletal muscle. Also expressed in spleen, kidney, lung, heart, microglia and liver. Detected in brain (at protein level).

The protein localises to the cytoplasm. Its subcellular location is the cytoskeleton. It is found in the cilium basal body. The protein resides in the cilium axoneme. It localises to the nucleus. Its function is as follows. Component of the tectonic-like complex, a complex localized at the transition zone of primary cilia and acting as a barrier that prevents diffusion of transmembrane proteins between the cilia and plasma membranes. The chain is B9 domain-containing protein 2 (B9d2) from Mus musculus (Mouse).